A 156-amino-acid chain; its full sequence is Ribonuclease H (156 aa).

In terms of domain architecture, RNase H type-1 spans 2 to 144 (SQFDVTVFTD…CDVLARAQAS (143 aa)). Asp11, Glu49, Asp71, and Asp136 together coordinate Mg(2+).

Belongs to the RNase H family. In terms of assembly, monomer. It depends on Mg(2+) as a cofactor.

Its subcellular location is the cytoplasm. The enzyme catalyses Endonucleolytic cleavage to 5'-phosphomonoester.. Its function is as follows. Endonuclease that specifically degrades the RNA of RNA-DNA hybrids. The protein is Ribonuclease H of Nitratidesulfovibrio vulgaris (strain ATCC 29579 / DSM 644 / CCUG 34227 / NCIMB 8303 / VKM B-1760 / Hildenborough) (Desulfovibrio vulgaris).